A 1935-amino-acid chain; its full sequence is Myosin-7 (1935 aa).

The Myosin N-terminal SH3-like domain occupies 32–81 (DLKKDVYVPDDKEEFVKAKILSREGGKVTAETEHGKTVTVKEDQVLQQNP). Positions 85–778 (DKIEDMAMLT…LLGLLEEMRD (694 aa)) constitute a Myosin motor domain. An N6,N6,N6-trimethyllysine modification is found at K129. ATP is bound at residue 178-185 (GESGAGKT). Residue T378 is modified to Phosphothreonine. Actin-binding stretches follow at residues 655–677 (LNKLMTNLRSTHPHFVRCIIPNE) and 757–771 (KFGHTKVFFKAGLLG). An IQ domain is found at 781–810 (LSRIITRIQAQSRGVLSRMEFKKLLERRDS). Residues 839-1935 (LLKSAETEKE…DIGTKGLNEE (1097 aa)) are a coiled coil. Residues S1137 and S1269 each carry the phosphoserine modification. Position 1282 is a phosphothreonine (T1282). Y1308 carries the post-translational modification Phosphotyrosine. At T1309 the chain carries Phosphothreonine. Residue S1510 is modified to Phosphoserine. T1513 carries the phosphothreonine modification. The tract at residues 1907–1935 (EERADIAESQVNKLRAKSRDIGTKGLNEE) is disordered. The span at 1923-1935 (KSRDIGTKGLNEE) shows a compositional bias: basic and acidic residues.

Belongs to the TRAFAC class myosin-kinesin ATPase superfamily. Myosin family. As to quaternary structure, muscle myosin is a hexameric protein that consists of 2 heavy chain subunits (MHC), 2 alkali light chain subunits (MLC) and 2 regulatory light chain subunits (MLC-2). Interacts with ECPAS. Interacts (via C-terminus) with LRRC39.

Its subcellular location is the cytoplasm. It is found in the myofibril. The protein localises to the sarcomere. In terms of biological role, myosins are actin-based motor molecules with ATPase activity essential for muscle contraction. Forms regular bipolar thick filaments that, together with actin thin filaments, constitute the fundamental contractile unit of skeletal and cardiac muscle. The chain is Myosin-7 (MYH7) from Sus scrofa (Pig).